The following is a 199-amino-acid chain: MAEEQVLNTHNASILLSAANKSHYPQDDLPEIALAGRSNVGKSSFINTILGRKNLARTSSKPGKTQLLNFFNIDDKLRFVDVPGYGYAKVSKSERAKWGKMIEEYLTSRDNLRAVVSLVDLRHAPSKEDIQMYDFLKYYDIPVIVVATKADKIPRGKWNKHESVVKKALNFDKSDTFIVFSSVERIGIDDSWDAILEQV.

The region spanning aspartate 28–valine 199 is the EngB-type G domain. Residues glycine 36–serine 43, glycine 63–leucine 67, aspartate 81–glycine 84, threonine 148–aspartate 151, and phenylalanine 180–serine 182 each bind GTP. Mg(2+)-binding residues include serine 43 and threonine 65.

Belongs to the TRAFAC class TrmE-Era-EngA-EngB-Septin-like GTPase superfamily. EngB GTPase family. The cofactor is Mg(2+).

Functionally, necessary for normal cell division and for the maintenance of normal septation. This Streptococcus pyogenes serotype M1 protein is Probable GTP-binding protein EngB.